Consider the following 189-residue polypeptide: Elongation factor P (189 aa).

The protein belongs to the elongation factor P family.

The protein resides in the cytoplasm. It participates in protein biosynthesis; polypeptide chain elongation. In terms of biological role, involved in peptide bond synthesis. Stimulates efficient translation and peptide-bond synthesis on native or reconstituted 70S ribosomes in vitro. Probably functions indirectly by altering the affinity of the ribosome for aminoacyl-tRNA, thus increasing their reactivity as acceptors for peptidyl transferase. The chain is Elongation factor P from Campylobacter jejuni subsp. doylei (strain ATCC BAA-1458 / RM4099 / 269.97).